The chain runs to 744 residues: Tripartite motif-containing protein 3 (744 aa).

Residue alanine 2 is modified to N-acetylalanine. Residues 2-290 (AKREDSPGPE…LAAQAFPERP (289 aa)) are interaction with KIF21B. A Phosphoserine modification is found at serine 7. The segment at 22-63 (CSICLDRYRCPKVLPCLHTFCERCLQNYIPPQSLTLSCPVCR) adopts an RING-type zinc-finger fold. The B box-type zinc-finger motif lies at 110–151 (GRPLSCPNHEGKTMEFYCEACETAMCGECRAGEHREHGTVLL). Positions 115, 118, 138, and 143 each coordinate Zn(2+). The stretch at 153-224 (DVVEQHKAAL…RKQALVSDLE (72 aa)) forms a coiled coil. The stretch at 317–418 (TTSAAAHETV…VRGSPFRVRA (102 aa)) is one Filamin repeat. Positions 420 to 462 (RPGDLPPSPDDVKRRVKSPGGPGSHVRQKAVRRPSSMYSTGGK) are disordered. At serine 427 the chain carries Phosphoserine. NHL repeat units lie at residues 473–516 (VFRV…FSNE), 520–563 (KFRF…FSPE), 564–605 (GKFK…FQPN), 609–652 (VGRF…YSAD), 656–699 (LFKF…FDSS), and 700–743 (GSFL…YRYL).

The protein belongs to the TRIM/RBCC family. As to quaternary structure, forms homooligomers. Interacts with TRIM2; this interaction reduces TRIM2 activity. Associates with myosin-Vb (MYO5B) and alpha-actinin-4 (ACTN4). Component of the CART complex, at least composed of ACTN4, HGS/HRS, MYO5B and TRIM3. Interacts with ZFYVE28/LST2. Interacts with KIF21B. As to expression, highly expressed in the brain, moderate levels in the lung, very low levels in the liver, kidney and heart. In the brain, expression was highest in the cerebellum. Expression in the brain is found at low levels at embryonic day 15 and then increases during the first two postnatal weeks before decreasing through adulthood.

The protein resides in the cytoplasm. It localises to the early endosome. Its subcellular location is the golgi apparatus. The protein localises to the trans-Golgi network. It is found in the cell projection. The protein resides in the dendrite. The enzyme catalyses S-ubiquitinyl-[E2 ubiquitin-conjugating enzyme]-L-cysteine + [acceptor protein]-L-lysine = [E2 ubiquitin-conjugating enzyme]-L-cysteine + N(6)-ubiquitinyl-[acceptor protein]-L-lysine.. Functionally, E3 ubiquitin ligase that plays essential roles in neuronal functions such as regulation of neuronal plasticity, learning, and memory. In addition to its neuronal functions, participates in other biological processes such as innate immunity or cell cycle regulation. Component of the cytoskeleton-associated recycling or transport complex in neurons, polyubiquitinates gamma-actin, thus regulating neuronal plasticity, learning, and memory. Ubiquitinates postsynaptic scaffold GKAP, a neuronal substrate involved in synaptic remodeling and thereby modulates dendritic spine morphology. Positively regulates motility of microtubule-dependent motor protein KIF21B. Induces growth arrest via its RING-dependent E3 ligase activity and ubiquinates CDKN1A. Positively regulates TLR3-mediated signaling by mediating 'Lys-63'-linked polyubiquitination of TLR3. In turn, promotes the recognition and sorting of polyubiquitinated TLR3 by the ESCRT complexes. The sequence is that of Tripartite motif-containing protein 3 (Trim3) from Rattus norvegicus (Rat).